A 280-amino-acid polypeptide reads, in one-letter code: Truncated lectin 2 (280 aa).

A signal peptide spans 1–26 (MSSSNFSCILSISLTFFILLLNKVNS). Mn(2+) contacts are provided by Glu-148 and Asp-150. Residues Asp-150, Phe-152, Asn-154, and Asp-158 each coordinate Ca(2+). Mn(2+) is bound at residue Asp-158. N-linked (GlcNAc...) asparagine glycosylation occurs at Asn-163. His-170 serves as a coordination point for Mn(2+). Asn-272 is a glycosylation site (N-linked (GlcNAc...) asparagine).

Belongs to the leguminous lectin family.

This chain is Truncated lectin 2 (LEC2), found in Medicago truncatula (Barrel medic).